The chain runs to 308 residues: Glutaminase (308 aa).

The substrate site is built by Ser-66, Asn-117, Glu-161, Asn-168, Tyr-192, Tyr-244, and Val-262.

Belongs to the glutaminase family. Homotetramer.

It carries out the reaction L-glutamine + H2O = L-glutamate + NH4(+). This Cronobacter sakazakii (strain ATCC BAA-894) (Enterobacter sakazakii) protein is Glutaminase.